The chain runs to 313 residues: Maintenance of mitochondrial morphology protein 1 (313 aa).

At 1 to 12 (MIHLPQGSFTQG) the chain is on the lumenal side. Residues 13–33 (LIVGQLLTLAIIYVFLRFFLF) form a helical membrane-spanning segment. The Cytoplasmic segment spans residues 34 to 313 (CSPIPKSVAN…APQEESSNED (280 aa)). A compositionally biased stretch (polar residues) spans 42–63 (ANSPKQTGNETPDETPSTPLSN). The interval 42 to 65 (ANSPKQTGNETPDETPSTPLSNNK) is disordered. One can recognise an SMP-LTD domain in the interval 90–288 (EPESLDWFNV…SPQFQQIAIP (199 aa)).

The protein belongs to the MMM1 family. As to quaternary structure, homodimer. Component of the ER-mitochondria encounter structure (ERMES) or MDM complex, composed of mmm1, mdm10, mdm12 and mdm34. A mmm1 homodimer associates with one molecule of mdm12 on each side in a pairwise head-to-tail manner, and the SMP-LTD domains of mmm1 and mdm12 generate a continuous hydrophobic tunnel for phospholipid trafficking.

The protein localises to the endoplasmic reticulum membrane. Component of the ERMES/MDM complex, which serves as a molecular tether to connect the endoplasmic reticulum (ER) and mitochondria. Components of this complex are involved in the control of mitochondrial shape and protein biogenesis, and function in nonvesicular lipid trafficking between the ER and mitochondria. The mdm12-mmm1 subcomplex functions in the major beta-barrel assembly pathway that is responsible for biogenesis of all outer membrane beta-barrel proteins, and acts in a late step after the SAM complex. The mdm10-mdm12-mmm1 subcomplex further acts in the TOM40-specific pathway after the action of the mdm12-mmm1 complex. Essential for establishing and maintaining the structure of mitochondria and maintenance of mtDNA nucleoids. The sequence is that of Maintenance of mitochondrial morphology protein 1 from Schizosaccharomyces pombe (strain 972 / ATCC 24843) (Fission yeast).